A 1003-amino-acid chain; its full sequence is Cytosolic carboxypeptidase 3 (1003 aa).

The disordered stretch occupies residues 1 to 23 (MSEDSEKEDYSDRTISDEDESDE). Residues 299-570 (YPYTYTNLQE…HFCDSLLDYC (272 aa)) form the Peptidase M14 domain. Zn(2+)-binding residues include histidine 364, glutamate 367, and histidine 460. Glutamate 534 acts as the Proton donor/acceptor in catalysis. 2 disordered regions span residues 642–662 (KQLK…NIRE) and 911–1003 (KSSE…QRDT). The segment covering 649–662 (ERNSTIERHQNIRE) has biased composition (basic and acidic residues). The span at 922–934 (PKKRRKYSRVKAT) shows a compositional bias: basic residues. Over residues 963–976 (AEGSSQQGTMQTAP) the composition is skewed to polar residues.

Belongs to the peptidase M14 family. The cofactor is Zn(2+).

It localises to the cytoplasm. Its subcellular location is the cytosol. The catalysed reaction is (L-glutamyl)(n+1)-gamma-L-glutamyl-L-glutamyl-[protein] + H2O = (L-glutamyl)(n)-gamma-L-glutamyl-L-glutamyl-[protein] + L-glutamate. Its function is as follows. Metallocarboxypeptidase that mediates deglutamylation of tubulin and non-tubulin target proteins. Catalyzes the removal of polyglutamate side chains present on the gamma-carboxyl group of glutamate residues within the C-terminal tail of tubulin protein. Specifically cleaves tubulin long-side-chains, while it is not able to remove the branching point glutamate. Also catalyzes the removal of polyglutamate residues from the carboxy-terminus of non-tubulin proteins such as MYLK. May catalyze the hydrolysis of aspartate from the carboxy-terminus of target proteins. Does not show detyrosinase or deglycylase activities from the carboxy-terminus of target proteins. In Bos taurus (Bovine), this protein is Cytosolic carboxypeptidase 3 (AGBL3).